A 202-amino-acid polypeptide reads, in one-letter code: Peptidyl-tRNA hydrolase (202 aa).

TRNA is bound at residue Y14. Residue H19 is the Proton acceptor of the active site. TRNA-binding residues include Y64, N66, and N112.

It belongs to the PTH family. In terms of assembly, monomer.

The protein resides in the cytoplasm. The catalysed reaction is an N-acyl-L-alpha-aminoacyl-tRNA + H2O = an N-acyl-L-amino acid + a tRNA + H(+). Its function is as follows. Hydrolyzes ribosome-free peptidyl-tRNAs (with 1 or more amino acids incorporated), which drop off the ribosome during protein synthesis, or as a result of ribosome stalling. Catalyzes the release of premature peptidyl moieties from peptidyl-tRNA molecules trapped in stalled 50S ribosomal subunits, and thus maintains levels of free tRNAs and 50S ribosomes. The sequence is that of Peptidyl-tRNA hydrolase from Xanthobacter autotrophicus (strain ATCC BAA-1158 / Py2).